The following is a 495-amino-acid chain: Glutamyl-tRNA(Gln) amidotransferase subunit A (495 aa).

Residues lysine 78 and serine 158 each act as charge relay system in the active site. Catalysis depends on serine 182, which acts as the Acyl-ester intermediate.

This sequence belongs to the amidase family. GatA subfamily. As to quaternary structure, heterotrimer of A, B and C subunits.

It carries out the reaction L-glutamyl-tRNA(Gln) + L-glutamine + ATP + H2O = L-glutaminyl-tRNA(Gln) + L-glutamate + ADP + phosphate + H(+). Functionally, allows the formation of correctly charged Gln-tRNA(Gln) through the transamidation of misacylated Glu-tRNA(Gln) in organisms which lack glutaminyl-tRNA synthetase. The reaction takes place in the presence of glutamine and ATP through an activated gamma-phospho-Glu-tRNA(Gln). This chain is Glutamyl-tRNA(Gln) amidotransferase subunit A, found in Roseobacter denitrificans (strain ATCC 33942 / OCh 114) (Erythrobacter sp. (strain OCh 114)).